The chain runs to 202 residues: Potassium-transporting ATPase KdpC subunit (202 aa).

Residues 7 to 27 (PAIFVLLALTLITGLLYPLAM) traverse the membrane as a helical segment. A disordered region spans residues 66 to 103 (FHGRPSATSTADPNDSTKTVPAPYNAANSSGSNLGPTS). 2 stretches are compositionally biased toward polar residues: residues 71–84 (SATS…STKT) and 91–101 (AANSSGSNLGP).

This sequence belongs to the KdpC family. As to quaternary structure, the system is composed of three essential subunits: KdpA, KdpB and KdpC.

The protein resides in the cell inner membrane. In terms of biological role, part of the high-affinity ATP-driven potassium transport (or Kdp) system, which catalyzes the hydrolysis of ATP coupled with the electrogenic transport of potassium into the cytoplasm. This subunit acts as a catalytic chaperone that increases the ATP-binding affinity of the ATP-hydrolyzing subunit KdpB by the formation of a transient KdpB/KdpC/ATP ternary complex. The protein is Potassium-transporting ATPase KdpC subunit of Bradyrhizobium sp. (strain ORS 278).